A 55-amino-acid polypeptide reads, in one-letter code: MKNIDSIKLRIFSSICFAIAGILGLVDKNYLLGGAFILMLVSNIILIISEKKKLK.

This is an uncharacterized protein from Clostridium perfringens.